The chain runs to 150 residues: D-aminoacyl-tRNA deacylase (150 aa).

The Gly-cisPro motif, important for rejection of L-amino acids motif lies at 138–139 (GP).

It belongs to the DTD family. As to quaternary structure, homodimer.

The protein localises to the cytoplasm. It catalyses the reaction glycyl-tRNA(Ala) + H2O = tRNA(Ala) + glycine + H(+). The enzyme catalyses a D-aminoacyl-tRNA + H2O = a tRNA + a D-alpha-amino acid + H(+). Functionally, an aminoacyl-tRNA editing enzyme that deacylates mischarged D-aminoacyl-tRNAs. Also deacylates mischarged glycyl-tRNA(Ala), protecting cells against glycine mischarging by AlaRS. Acts via tRNA-based rather than protein-based catalysis; rejects L-amino acids rather than detecting D-amino acids in the active site. By recycling D-aminoacyl-tRNA to D-amino acids and free tRNA molecules, this enzyme counteracts the toxicity associated with the formation of D-aminoacyl-tRNA entities in vivo and helps enforce protein L-homochirality. This is D-aminoacyl-tRNA deacylase from Chlorobium limicola (strain DSM 245 / NBRC 103803 / 6330).